The chain runs to 129 residues: D-ribose pyranase (129 aa).

H20 serves as the catalytic Proton donor. Substrate is bound by residues D28, H96, and 118-120; that span reads YAN.

It belongs to the RbsD / FucU family. RbsD subfamily. Homodecamer.

It is found in the cytoplasm. The enzyme catalyses beta-D-ribopyranose = beta-D-ribofuranose. Its pathway is carbohydrate metabolism; D-ribose degradation; D-ribose 5-phosphate from beta-D-ribopyranose: step 1/2. Catalyzes the interconversion of beta-pyran and beta-furan forms of D-ribose. The polypeptide is D-ribose pyranase (Streptomyces coelicolor (strain ATCC BAA-471 / A3(2) / M145)).